A 175-amino-acid chain; its full sequence is Adenine phosphoribosyltransferase (175 aa).

It belongs to the purine/pyrimidine phosphoribosyltransferase family. In terms of assembly, homodimer.

Its subcellular location is the cytoplasm. It catalyses the reaction AMP + diphosphate = 5-phospho-alpha-D-ribose 1-diphosphate + adenine. It participates in purine metabolism; AMP biosynthesis via salvage pathway; AMP from adenine: step 1/1. Functionally, catalyzes a salvage reaction resulting in the formation of AMP, that is energically less costly than de novo synthesis. This is Adenine phosphoribosyltransferase from Maricaulis maris (strain MCS10) (Caulobacter maris).